A 476-amino-acid chain; its full sequence is NADH-quinone oxidoreductase subunit N (476 aa).

Helical transmembrane passes span 5–25 (LALIWPELILTIGGLITLMLG), 38–58 (LSALLTLAAAAAAAIALFGVE), 70–90 (AFGGFAKLLIYAASFICILVA), 97–117 (GMRAEYPTLILFAALGMGIMA), 122–142 (LMTLYVGLELNSLAAYVLASF), 157–177 (FVLGALASGMLLYGISLLYGF), 196–218 (IGLIFGIVFVLSGLGFKISAVPF), 231–253 (TPVTTFFASAPKVAAMALMARIV), 264–284 (WQQIVIFLALASIILGAVGAI), 292–312 (LLAYSSINNVGFMLIGLAAGT), 318–338 (GVLTYLLVYLVTTLGAFLVVL), 364–384 (LAAAMSVFLFSLAGIPPLFGF), 401–421 (PLAVAGIVASVIGAFYYIAII), and 445–465 (IVAASALWLLAVGYLFIPALA).

Belongs to the complex I subunit 2 family. As to quaternary structure, NDH-1 is composed of 14 different subunits. Subunits NuoA, H, J, K, L, M, N constitute the membrane sector of the complex.

It is found in the cell inner membrane. It carries out the reaction a quinone + NADH + 5 H(+)(in) = a quinol + NAD(+) + 4 H(+)(out). In terms of biological role, NDH-1 shuttles electrons from NADH, via FMN and iron-sulfur (Fe-S) centers, to quinones in the respiratory chain. The immediate electron acceptor for the enzyme in this species is believed to be ubiquinone. Couples the redox reaction to proton translocation (for every two electrons transferred, four hydrogen ions are translocated across the cytoplasmic membrane), and thus conserves the redox energy in a proton gradient. The chain is NADH-quinone oxidoreductase subunit N from Sphingopyxis alaskensis (strain DSM 13593 / LMG 18877 / RB2256) (Sphingomonas alaskensis).